A 156-amino-acid polypeptide reads, in one-letter code: ATP synthase subunit b (156 aa).

The helical transmembrane segment at 11-31 threads the bilayer; sequence AIAFAIFVMFCMKFVWPPLIG.

The protein belongs to the ATPase B chain family. As to quaternary structure, F-type ATPases have 2 components, F(1) - the catalytic core - and F(0) - the membrane proton channel. F(1) has five subunits: alpha(3), beta(3), gamma(1), delta(1), epsilon(1). F(0) has three main subunits: a(1), b(2) and c(10-14). The alpha and beta chains form an alternating ring which encloses part of the gamma chain. F(1) is attached to F(0) by a central stalk formed by the gamma and epsilon chains, while a peripheral stalk is formed by the delta and b chains.

Its subcellular location is the cell inner membrane. In terms of biological role, f(1)F(0) ATP synthase produces ATP from ADP in the presence of a proton or sodium gradient. F-type ATPases consist of two structural domains, F(1) containing the extramembraneous catalytic core and F(0) containing the membrane proton channel, linked together by a central stalk and a peripheral stalk. During catalysis, ATP synthesis in the catalytic domain of F(1) is coupled via a rotary mechanism of the central stalk subunits to proton translocation. Component of the F(0) channel, it forms part of the peripheral stalk, linking F(1) to F(0). This chain is ATP synthase subunit b, found in Psychrobacter cryohalolentis (strain ATCC BAA-1226 / DSM 17306 / VKM B-2378 / K5).